A 256-amino-acid polypeptide reads, in one-letter code: MSVRALFPKGKEPRYAFEVLIRMLPEAVLNFSSDGISLKALDPTKTALLDLTFYATALEDYSIDEETKVGIIFTTIKDVIKRIGATEKLELEVDKERNRFSFYIYPKKGREVGLVRRFSFPIVQVLEEEIPELAVSFDASFEIDSAVLDDILAMVDEVSDWIQITVSPDKVLFRGVGEGGKAAETELSYDSESVFNISAGEAASAKYSVEMLRDISGKMKSLSKRVKVELSANKPIRLTYEFTSGVFTATIAPRVD.

Belongs to the PCNA family. As to quaternary structure, homotrimer. The subunits circularize to form a toroid; DNA passes through its center. Replication factor C (RFC) is required to load the toroid on the DNA.

Its function is as follows. Sliding clamp subunit that acts as a moving platform for DNA processing. Responsible for tethering the catalytic subunit of DNA polymerase and other proteins to DNA during high-speed replication. In Pyrobaculum aerophilum (strain ATCC 51768 / DSM 7523 / JCM 9630 / CIP 104966 / NBRC 100827 / IM2), this protein is DNA polymerase sliding clamp 2.